Consider the following 435-residue polypeptide: uncharacterized protein (435 aa).

Helical transmembrane passes span 14–34 (VSMA…GVGA), 44–64 (TFIL…KLGA), 84–104 (IITG…IALF), 123–143 (FNIA…NFFG), 153–173 (FIVL…LITI), 187–207 (VSGM…FGVI), 224–244 (AIFI…ISAI), 267–287 (FLGN…ISSA), 324–344 (LYIT…EGVA), 346–366 (ITSA…YILI), 375–395 (IVIF…YYQW), and 400–420 (FVFY…IIYR).

Its subcellular location is the cell membrane. This is an uncharacterized protein from Methanocaldococcus jannaschii (strain ATCC 43067 / DSM 2661 / JAL-1 / JCM 10045 / NBRC 100440) (Methanococcus jannaschii).